The primary structure comprises 105 residues: Heat shock protein HspQ (105 aa).

Belongs to the HspQ family.

The protein localises to the cytoplasm. In terms of biological role, involved in the degradation of certain denaturated proteins, including DnaA, during heat shock stress. The chain is Heat shock protein HspQ from Salmonella choleraesuis (strain SC-B67).